A 185-amino-acid chain; its full sequence is Putative manganese efflux pump MntP (185 aa).

A run of 6 helical transmembrane segments spans residues 4–24 (LFIG…TDAF), 40–60 (IFHI…AGMA), 64–84 (LLSG…LFIL), 108–128 (LLLF…SLGM), 134–154 (FLAV…GLLA), and 165–185 (YSEA…LLPV).

It belongs to the MntP (TC 9.B.29) family.

It is found in the cell membrane. Probably functions as a manganese efflux pump. In Bacillus velezensis (strain DSM 23117 / BGSC 10A6 / LMG 26770 / FZB42) (Bacillus amyloliquefaciens subsp. plantarum), this protein is Putative manganese efflux pump MntP.